The chain runs to 159 residues: MNLRRKNRLWVVCAVLAGLALTTALVLYALRANIDLFYTPGEILYGKRETQQLPAVGQRLRVGGMVMPGSVRRDPDSLKVNFSLYDAEGSVTVSYEGILPDLFREGQGVVVQGTLEKGNHVLAHEVLAKHDENYTPPEVEKAMQENHRRPQRADKDTSS.

Residues 1-8 (MNLRRKNR) are Cytoplasmic-facing. Residues 9-29 (LWVVCAVLAGLALTTALVLYA) form a helical; Signal-anchor for type II membrane protein membrane-spanning segment. The Periplasmic portion of the chain corresponds to 30–159 (LRANIDLFYT…PQRADKDTSS (130 aa)). The tract at residues 129–159 (KHDENYTPPEVEKAMQENHRRPQRADKDTSS) is disordered. 2 residues coordinate heme: H130 and Y134.

This sequence belongs to the CcmE/CycJ family.

The protein localises to the cell inner membrane. In terms of biological role, heme chaperone required for the biogenesis of c-type cytochromes. Transiently binds heme delivered by CcmC and transfers the heme to apo-cytochromes in a process facilitated by CcmF and CcmH. This is Cytochrome c-type biogenesis protein CcmE from Salmonella paratyphi A (strain ATCC 9150 / SARB42).